The following is a 154-amino-acid chain: Interleukin-7 (154 aa).

The N-terminal stretch at 1 to 25 (MFHVSFRYIFGIPPLILVLLPVTSS) is a signal peptide. Disulfide bonds link cysteine 27/cysteine 145, cysteine 58/cysteine 133, and cysteine 71/cysteine 116. 2 N-linked (GlcNAc...) asparagine glycosylation sites follow: asparagine 94 and asparagine 115.

It belongs to the IL-7/IL-9 family. Interacts with IL7R and CSF2RG. Three disulfide bonds are present.

It localises to the secreted. Functionally, hematopoietic cytokine that plays an essential role in the development, expansion, and survival of naive and memory T-cells and B-cells thereby regulating the number of mature lymphocytes and maintaining lymphoid homeostasis. Mechanistically, exerts its biological effects through a receptor composed of IL7RA subunit and the cytokine receptor common subunit gamma/CSF2RG. Binding to the receptor leads to activation of various kinases including JAK1 or JAK3 depending on the cell type and subsequently propagation of signals through activation of several downstream signaling pathways including the PI3K/Akt/mTOR or the JAK-STAT5. The sequence is that of Interleukin-7 (Il7) from Mus musculus (Mouse).